Reading from the N-terminus, the 420-residue chain is Tyrosine--tRNA ligase 2 (420 aa).

An L-tyrosine-binding site is contributed by Tyr34. A 'HIGH' region motif is present at residues 39 to 48 (PTGDSMHIGH). Residues Tyr168 and Gln172 each coordinate L-tyrosine. The short motif at 230–234 (KFGKS) is the 'KMSKS' region element. An ATP-binding site is contributed by Lys233. An S4 RNA-binding domain is found at 352–418 (KNIVEWLVDL…GKKNYSLVKL (67 aa)).

The protein belongs to the class-I aminoacyl-tRNA synthetase family. TyrS type 1 subfamily. In terms of assembly, homodimer.

It is found in the cytoplasm. The enzyme catalyses tRNA(Tyr) + L-tyrosine + ATP = L-tyrosyl-tRNA(Tyr) + AMP + diphosphate + H(+). Functionally, catalyzes the attachment of tyrosine to tRNA(Tyr) in a two-step reaction: tyrosine is first activated by ATP to form Tyr-AMP and then transferred to the acceptor end of tRNA(Tyr). This Bacillus cereus (strain ATCC 14579 / DSM 31 / CCUG 7414 / JCM 2152 / NBRC 15305 / NCIMB 9373 / NCTC 2599 / NRRL B-3711) protein is Tyrosine--tRNA ligase 2.